Reading from the N-terminus, the 326-residue chain is UDP-3-O-acylglucosamine N-acyltransferase (326 aa).

His225 serves as the catalytic Proton acceptor.

Belongs to the transferase hexapeptide repeat family. LpxD subfamily. In terms of assembly, homotrimer.

The enzyme catalyses a UDP-3-O-[(3R)-3-hydroxyacyl]-alpha-D-glucosamine + a (3R)-hydroxyacyl-[ACP] = a UDP-2-N,3-O-bis[(3R)-3-hydroxyacyl]-alpha-D-glucosamine + holo-[ACP] + H(+). The protein operates within bacterial outer membrane biogenesis; LPS lipid A biosynthesis. Its function is as follows. Catalyzes the N-acylation of UDP-3-O-acylglucosamine using 3-hydroxyacyl-ACP as the acyl donor. Is involved in the biosynthesis of lipid A, a phosphorylated glycolipid that anchors the lipopolysaccharide to the outer membrane of the cell. This chain is UDP-3-O-acylglucosamine N-acyltransferase, found in Verminephrobacter eiseniae (strain EF01-2).